The sequence spans 471 residues: Steroid C26-monooxygenase (471 aa).

Gly-238 contributes to the substrate binding site. Cys-412 lines the heme pocket.

It belongs to the cytochrome P450 family. Heme serves as cofactor.

It catalyses the reaction cholest-4-en-3-one + 6 reduced [2Fe-2S]-[ferredoxin] + 3 O2 + 5 H(+) = (25S)-3-oxocholest-4-en-26-oate + 6 oxidized [2Fe-2S]-[ferredoxin] + 4 H2O. Functionally, involved in the utilization of cholesterol as the sole carbon and energy source by degrading the side chain. Primarily catalyzes the sequential oxidation of the terminal methyl of cholest-4-en-3-one into (25S)-26-hydroxycholest-4-en-3-one (alcohol), (25S)-26-oxocholest-4-en-3-one (aldehyde), to finally yield the carboxylic acid (25S)-3-oxocholest-4-en-26-oate. Also able to sequentially oxidize cholesterol itself, not only cholest-4-en-3-one. The chain is Steroid C26-monooxygenase (cyp125) from Rhodococcus jostii (strain RHA1).